A 294-amino-acid chain; its full sequence is Phosphatidylserine decarboxylase proenzyme (294 aa).

Residues D88, H145, and S248 each act as charge relay system; for autoendoproteolytic cleavage activity in the active site. The Schiff-base intermediate with substrate; via pyruvic acid; for decarboxylase activity role is filled by S248. Residue S248 is modified to Pyruvic acid (Ser); by autocatalysis.

It belongs to the phosphatidylserine decarboxylase family. PSD-B subfamily. Prokaryotic type I sub-subfamily. Heterodimer of a large membrane-associated beta subunit and a small pyruvoyl-containing alpha subunit. Pyruvate is required as a cofactor. In terms of processing, is synthesized initially as an inactive proenzyme. Formation of the active enzyme involves a self-maturation process in which the active site pyruvoyl group is generated from an internal serine residue via an autocatalytic post-translational modification. Two non-identical subunits are generated from the proenzyme in this reaction, and the pyruvate is formed at the N-terminus of the alpha chain, which is derived from the carboxyl end of the proenzyme. The autoendoproteolytic cleavage occurs by a canonical serine protease mechanism, in which the side chain hydroxyl group of the serine supplies its oxygen atom to form the C-terminus of the beta chain, while the remainder of the serine residue undergoes an oxidative deamination to produce ammonia and the pyruvoyl prosthetic group on the alpha chain. During this reaction, the Ser that is part of the protease active site of the proenzyme becomes the pyruvoyl prosthetic group, which constitutes an essential element of the active site of the mature decarboxylase.

It is found in the cell membrane. It catalyses the reaction a 1,2-diacyl-sn-glycero-3-phospho-L-serine + H(+) = a 1,2-diacyl-sn-glycero-3-phosphoethanolamine + CO2. It participates in phospholipid metabolism; phosphatidylethanolamine biosynthesis; phosphatidylethanolamine from CDP-diacylglycerol: step 2/2. Catalyzes the formation of phosphatidylethanolamine (PtdEtn) from phosphatidylserine (PtdSer). In Herminiimonas arsenicoxydans, this protein is Phosphatidylserine decarboxylase proenzyme.